The chain runs to 253 residues: GTP cyclohydrolase 1 type 2 homolog (253 aa).

A divalent metal cation-binding residues include histidine 64, histidine 65, aspartate 101, histidine 222, and glutamate 226.

The protein belongs to the GTP cyclohydrolase I type 2/NIF3 family. Homohexamer.

The polypeptide is GTP cyclohydrolase 1 type 2 homolog (Halobacterium salinarum (strain ATCC 700922 / JCM 11081 / NRC-1) (Halobacterium halobium)).